The primary structure comprises 251 residues: CDP-diacylglycerol pyrophosphatase (251 aa).

The helical transmembrane segment at 4–24 (AGLLFLVMIVIAVVATGIGYW) threads the bilayer.

The protein belongs to the Cdh family.

Its subcellular location is the cell inner membrane. The catalysed reaction is a CDP-1,2-diacyl-sn-glycerol + H2O = a 1,2-diacyl-sn-glycero-3-phosphate + CMP + 2 H(+). The protein operates within phospholipid metabolism; CDP-diacylglycerol degradation; phosphatidate from CDP-diacylglycerol: step 1/1. In Escherichia coli O45:K1 (strain S88 / ExPEC), this protein is CDP-diacylglycerol pyrophosphatase.